Reading from the N-terminus, the 592-residue chain is Laccase PFICI_06862 (592 aa).

The N-terminal stretch at 1–19 (MYIQTQFASLLLLAGTSLA) is a signal peptide. Asparagine 26 carries N-linked (GlcNAc...) asparagine glycosylation. Plastocyanin-like domains lie at 32–142 (QWSS…WIAP) and 173–350 (VVIS…RYPG). Residues histidine 78, histidine 80, histidine 123, and histidine 125 each coordinate Cu cation. N-linked (GlcNAc...) asparagine glycans are attached at residues asparagine 370, asparagine 407, and asparagine 454. Residues 445-563 (SDVQGGSMQN…AGQQVVLLEG (119 aa)) enclose the Plastocyanin-like 3 domain. Cu cation is bound at residue histidine 475. N-linked (GlcNAc...) asparagine glycosylation occurs at asparagine 524.

This sequence belongs to the multicopper oxidase family.

The protein localises to the cell surface. It participates in pigment biosynthesis; melanin biosynthesis. In terms of biological role, laccase involved the biosynthesis of dihydroxynaphthalene (DHN)-melanin, a bluish-green pigment forming a dark layer in the conidial wall that protects the conidia from UV radiations. The first step of the pathway is the production of the pentaketide 1,3,6,8-tetrahydroxynaphthalene (1,3,6,8-THN or T4HN) by the polyketide synthase PfmaE though condensation of acetyl-CoA with malonyl-CoA. T4HN is not stable and easily oxidizes into the stable form flaviolin. T4HN is also substrate of the hydroxynaphthalene reductase PfmaG to yield scytalone. The scytalone dehydratase PfmaJ then reduces scytalone to 1,3,8-THN. 1,3,8-THN is then substrate of the hydroxynaphthalene reductase PfmaI to yield vermelone. Vermelone is further converted by the multicopper oxidase PfmaD to 1,8-DHN. Finally the laccase PFICI_06862 transforms 1,8-DHN to DHN-melanin. The roles of the 5-oxoprolinase PfmaA and the proline iminopeptidase PfmaB within the cluster have not been elucidated yet. This Pestalotiopsis fici (strain W106-1 / CGMCC3.15140) protein is Laccase PFICI_06862.